Consider the following 587-residue polypeptide: MFS-type transporter opaD (587 aa).

Transmembrane regions (helical) follow at residues V87–L107, M124–L146, W153–P173, I184–V204, G214–F234, W242–F262, I284–G304, I315–W335, and L357–F377. A glycan (N-linked (GlcNAc...) asparagine) is linked at N382. Helical transmembrane passes span I393–L413, G414–L434, I447–V467, L483–F503, and V554–W574.

Belongs to the major facilitator superfamily. TCR/Tet family.

It localises to the membrane. MFS-type transporter; part of the gene cluster that mediates the biosynthesis of oxepinamides, derivatives of anthranilyl-containing tripeptides that share an oxepin ring and a fused pyrimidinone moiety. This Aspergillus ustus protein is MFS-type transporter opaD.